The following is a 35-amino-acid chain: Pheromone-binding protein (35 aa).

It belongs to the PBP/GOBP family. As to expression, antenna.

Its function is as follows. This major soluble protein in olfactory sensilla of male moths might serve to solubilize the extremely hydrophobic pheromone molecules and to transport pheromone through the aqueous lymph to receptors located on olfactory cilia. In Hyalophora cecropia (Cecropia moth), this protein is Pheromone-binding protein.